Reading from the N-terminus, the 373-residue chain is 4-hydroxy-3-methylbut-2-en-1-yl diphosphate synthase (flavodoxin) (373 aa).

Positions 269, 272, 304, and 311 each coordinate [4Fe-4S] cluster.

It belongs to the IspG family. [4Fe-4S] cluster serves as cofactor.

The catalysed reaction is (2E)-4-hydroxy-3-methylbut-2-enyl diphosphate + oxidized [flavodoxin] + H2O + 2 H(+) = 2-C-methyl-D-erythritol 2,4-cyclic diphosphate + reduced [flavodoxin]. Its pathway is isoprenoid biosynthesis; isopentenyl diphosphate biosynthesis via DXP pathway; isopentenyl diphosphate from 1-deoxy-D-xylulose 5-phosphate: step 5/6. In terms of biological role, converts 2C-methyl-D-erythritol 2,4-cyclodiphosphate (ME-2,4cPP) into 1-hydroxy-2-methyl-2-(E)-butenyl 4-diphosphate. The polypeptide is 4-hydroxy-3-methylbut-2-en-1-yl diphosphate synthase (flavodoxin) (Baumannia cicadellinicola subsp. Homalodisca coagulata).